We begin with the raw amino-acid sequence, 564 residues long: Periplasmic [NiFe] hydrogenase large subunit (564 aa).

Ni(2+) contacts are provided by C72, C75, C543, and C546. Residues 550–564 (VIEPETNEILKFKVC) constitute a propeptide that is removed on maturation.

The protein belongs to the [NiFe]/[NiFeSe] hydrogenase large subunit family. As to quaternary structure, heterodimer of a large and a small subunit. Ni(2+) is required as a cofactor.

It localises to the periplasm. It carries out the reaction 2 Fe(III)-[cytochrome c3] + H2 = 2 Fe(II)-[cytochrome c3] + 2 H(+). In Solidesulfovibrio fructosivorans (Desulfovibrio fructosivorans), this protein is Periplasmic [NiFe] hydrogenase large subunit (hydB).